Consider the following 237-residue polypeptide: Phosphoribosylaminoimidazole-succinocarboxamide synthase (237 aa).

The protein belongs to the SAICAR synthetase family.

It catalyses the reaction 5-amino-1-(5-phospho-D-ribosyl)imidazole-4-carboxylate + L-aspartate + ATP = (2S)-2-[5-amino-1-(5-phospho-beta-D-ribosyl)imidazole-4-carboxamido]succinate + ADP + phosphate + 2 H(+). Its pathway is purine metabolism; IMP biosynthesis via de novo pathway; 5-amino-1-(5-phospho-D-ribosyl)imidazole-4-carboxamide from 5-amino-1-(5-phospho-D-ribosyl)imidazole-4-carboxylate: step 1/2. The protein is Phosphoribosylaminoimidazole-succinocarboxamide synthase of Listeria monocytogenes serovar 1/2a (strain ATCC BAA-679 / EGD-e).